The following is a 1208-amino-acid chain: Transient receptor potential cation channel subfamily M member 4 (1208 aa).

At 1 to 776 (MVGQEKEQSW…SYFWGAPVTA (776 aa)) the chain is on the cytoplasmic side. ATP is bound by residues arginine 172, arginine 215, and leucine 226. Ca(2+) contacts are provided by aspartate 271, alanine 393, aspartate 396, and glutamate 397. Positions 422 and 449 each coordinate ATP. A phosphoserine mark is found at serine 527 and serine 538. Residues 777-797 (FLGNVVSYLLFLLLFAHVLLV) form a helical membrane-spanning segment. Residues 798-808 (DFQPTKPGVFE) are Extracellular-facing. The chain crosses the membrane as a helical span at residues 809–829 (LLLYFWAFTLLCEELRQGLGG). Ca(2+) contacts are provided by glutamate 822 and glutamine 825. Over 830–857 (GWGTLANGGPGPGKAPLRHRLHLYLLDT) the chain is Cytoplasmic. Residues 858–878 (WNQCDLLALTCFLLGVGCRLT) traverse the membrane as a helical segment. Residues asparagine 859 and aspartate 862 each contribute to the Ca(2+) site. Topologically, residues 879 to 880 (PG) are extracellular. Residues 881–904 (LFDLGRTVLCLDFMIFTLRLLHIF) form a helical membrane-spanning segment. The Cytoplasmic segment spans residues 905 to 924 (TVNKQLGPKIVIVSKMMKDV). Residues 925-945 (FFFLFFLCVWLVAYGVATEGI) traverse the membrane as a helical segment. The Extracellular portion of the chain corresponds to 946–957 (LRPQDRSLPSIL). Residues 958–978 (RRVFYRPYLQIFGQIPQEEMD) constitute an intramembrane region (pore-forming). The Selectivity filter signature appears at 969–971 (FGQ). Residues 979–1013 (VALMNPSNCSAERGSWAHPEGPVAGSCVSQYANWL) are Extracellular-facing. Residues cysteine 987 and cysteine 1005 are joined by a disulfide bond. A helical membrane pass occupies residues 1014–1034 (VVLLLIVFLLVANILLLNLLI). Residues 1035–1208 (AMFSYTFNKV…PPPSPTGSKD (174 aa)) lie on the Cytoplasmic side of the membrane. Residues 1070–1170 (APPLIIISHL…EYDRRLRGLE (101 aa)) form a calmodulin-binding region. Residues 1128 to 1180 (LAQARDKRDSDSERLKRTSQKVDTALKQLGQIREYDRRLRGLEREVQHCSRVL) adopt a coiled-coil conformation. The mediates modulation by decavanadate and PIP2-binding stretch occupies residues 1130–1135 (QARDKR). Phosphoserine; by PKC is present on residues serine 1139 and serine 1146. Residues 1189-1208 (HSALLPPGGPPPPSPTGSKD) are disordered. A compositionally biased stretch (pro residues) spans 1195 to 1208 (PGGPPPPSPTGSKD).

It belongs to the transient receptor (TC 1.A.4) family. LTrpC subfamily. TRPM4 sub-subfamily. In terms of assembly, homotetramer. Post-translationally, phosphorylation by PKC leads to increase the sensitivity to Ca(2+). Sumoylated. Desumoylated by SENP1. As to expression, isoform 1 is highly expressed in the testis with a moderate expression in the brain, spleen and thymus. Isoform 2 is only expressed in the brain and spleen.

It localises to the cell membrane. It is found in the endoplasmic reticulum. Its subcellular location is the golgi apparatus. It carries out the reaction Na(+)(in) = Na(+)(out). The enzyme catalyses K(+)(in) = K(+)(out). Its activity is regulated as follows. Gating is voltage-dependent and repressed by decavanadate. Calmodulin-binding confers the Ca(2+) sensitivity. ATP is able to restore Ca(2+) sensitivity after desensitization. Phosphatidylinositol 4,5-bisphosphate (PIP2)-binding strongly enhances activity, by increasing the channel's Ca(2+) sensitivity and shifting its voltage dependence of activation towards negative potentials. Activity is also enhanced by 3,5-bis(trifluoromethyl)pyrazole derivative (BTP2). Exhibits pronounced temperature sensitivity, with activities strongly intensifying near physiological temperatures. TRPM4 can adopt distinct conformations at different temperatures, markedly influencing where and how ligands interact with them. Functionally, calcium-activated selective cation channel that mediates membrane depolarization. While it is activated by increase in intracellular Ca(2+), it is impermeable to it. Mediates transport of monovalent cations (Na(+) &gt; K(+) &gt; Cs(+) &gt; Li(+)), leading to depolarize the membrane. It thereby plays a central role in cadiomyocytes, neurons from entorhinal cortex, dorsal root and vomeronasal neurons, endocrine pancreas cells, kidney epithelial cells, cochlea hair cells etc. Participates in T-cell activation by modulating Ca(2+) oscillations after T lymphocyte activation, which is required for NFAT-dependent IL2 production. Involved in myogenic constriction of cerebral arteries. Controls insulin secretion in pancreatic beta-cells. May also be involved in pacemaking or could cause irregular electrical activity under conditions of Ca(2+) overload. Affects T-helper 1 (Th1) and T-helper 2 (Th2) cell motility and cytokine production through differential regulation of calcium signaling and NFATC1 localization. Enhances cell proliferation through up-regulation of the beta-catenin signaling pathway. Plays a role in keratinocyte differentiation. Lacks channel activity. The protein is Transient receptor potential cation channel subfamily M member 4 (Trpm4) of Rattus norvegicus (Rat).